A 181-amino-acid polypeptide reads, in one-letter code: Malignant T-cell-amplified sequence 2 (181 aa).

One can recognise a PUA domain in the interval 92–171; sequence LPHQQVDKGA…IGIENIHYLN (80 aa).

This sequence belongs to the MCTS1 family.

It localises to the cytoplasm. The polypeptide is Malignant T-cell-amplified sequence 2 (Homo sapiens (Human)).